We begin with the raw amino-acid sequence, 137 residues long: Large ribosomal subunit protein uL16 (137 aa).

The protein belongs to the universal ribosomal protein uL16 family. As to quaternary structure, part of the 50S ribosomal subunit.

Its function is as follows. Binds 23S rRNA and is also seen to make contacts with the A and possibly P site tRNAs. This Wolbachia pipientis wMel protein is Large ribosomal subunit protein uL16.